A 341-amino-acid chain; its full sequence is NADH-ubiquinone oxidoreductase chain 2 (341 aa).

10 helical membrane-spanning segments follow: residues 8–28 (ILFT…NSWL), 61–81 (FLTQ…LMLA), 95–115 (MIIM…FWFP), 121–141 (LTWM…LMLI), 146–166 (IKNL…IGGL), 174–194 (LMAF…MISE), 195–215 (SIWL…TFMF), 238–258 (FSLF…GFLP), 273–293 (FLLT…LRIC), and 321–341 (LIMT…FFML).

It belongs to the complex I subunit 2 family.

The protein resides in the mitochondrion inner membrane. It carries out the reaction a ubiquinone + NADH + 5 H(+)(in) = a ubiquinol + NAD(+) + 4 H(+)(out). Functionally, core subunit of the mitochondrial membrane respiratory chain NADH dehydrogenase (Complex I) that is believed to belong to the minimal assembly required for catalysis. Complex I functions in the transfer of electrons from NADH to the respiratory chain. The immediate electron acceptor for the enzyme is believed to be ubiquinone. This Drosophila yakuba (Fruit fly) protein is NADH-ubiquinone oxidoreductase chain 2 (mt:ND2).